A 306-amino-acid polypeptide reads, in one-letter code: Tricarboxylate transporter FUM11 (306 aa).

Solcar repeat units lie at residues 18-98 (SDTL…YQKL), 109-195 (FGIL…LKQV), and 206-292 (IGTV…VVEG). The next 6 helical transmembrane spans lie at 24–44 (LVAG…AEFA), 67–87 (GLQW…KTSI), 113–133 (LAGF…SERI), 170–189 (GFWP…LGSY), 209–229 (VKTF…TQPL), and 267–286 (GAVA…FMVY).

This sequence belongs to the mitochondrial carrier (TC 2.A.29) family.

The protein localises to the mitochondrion inner membrane. Its pathway is mycotoxin biosynthesis. In terms of biological role, tricarboxylate transporter; part of the gene cluster that mediates the biosynthesis of fumonisins B1 (FB1), B2 (FB2), B3 (FB3), and B4 (FB4), which are carcinogenic mycotoxins. Within the pathway, FUM11 is involved the addition of the tricarballylic moieties to the carbon backbone. FUM11 makes a tricarboxylic acid precursor available for fumonisin biosynthesis via its export from the mitochondria. The biosynthesis starts with the FUM1-catalyzed carbon chain assembly from one molecule of acetyl-CoA, eight molecules of malonyl-CoA, and two molecules of methionine (in S-adenosyl form). The C18 polyketide chain is released from the enzyme by a nucleophilic attack of a carbanion, which is derived from R-carbon of alanine by decarboxylation, on the carbonyl carbon of polyketide acyl chain. This step is catalyzed by the pyridoxal 5'-phosphate-dependent aminoacyl transferase FUM8. The resultant 3-keto intermediate is then stereospecifically reduced to a 3-hydroxyl product by reductase FUM13. Subsequent oxidations at C-10 by the cytochrome P450 monooxygenase FUM2, C-14 and C-15 by FUM6, FUM12 or FUM15, tricarballylic esterification of the hydroxyl groups on C-14 and C-15 by acyltransferase FUM14, and C-5 hydroxylation by 2-keto-glutarate-dependent dioxygenase FUM3 furnish the biosynthesis of fumonisins. The tricarballylic moieties are most likely derived from the citric acid cycle, and their addition to the carbon backbone may involve FUM7, FUM10, FUM11 and FUM14. The chain is Tricarboxylate transporter FUM11 from Gibberella moniliformis (strain M3125 / FGSC 7600) (Maize ear and stalk rot fungus).